The following is a 201-amino-acid chain: Probable quinol oxidase subunit 3 (201 aa).

The next 5 membrane-spanning stretches (helical) occupy residues 20 to 40 (LGFW…FATL), 62 to 82 (LVLI…IAIY), 91 to 111 (LMLI…GFEI), 133 to 153 (FFIL…WIIC), and 180 to 200 (FLDV…MVFS).

It belongs to the cytochrome c oxidase subunit 3 family.

It is found in the cell membrane. It catalyses the reaction 2 a quinol + O2 = 2 a quinone + 2 H2O. Functionally, catalyzes quinol oxidation with the concomitant reduction of oxygen to water. This is Probable quinol oxidase subunit 3 (qoxC) from Staphylococcus saprophyticus subsp. saprophyticus (strain ATCC 15305 / DSM 20229 / NCIMB 8711 / NCTC 7292 / S-41).